Consider the following 289-residue polypeptide: Thymidylate synthase (289 aa).

DUMP contacts are provided by residues R26 and 151 to 152 (RR). Residue C171 is the Nucleophile of the active site. Residues 191–194 (RSGD), N202, and 232–234 (HVY) contribute to the dUMP site. Residue D194 participates in (6R)-5,10-methylene-5,6,7,8-tetrahydrofolate binding. A288 is a binding site for (6R)-5,10-methylene-5,6,7,8-tetrahydrofolate.

The protein belongs to the thymidylate synthase family. In terms of assembly, homodimer.

The enzyme catalyses dUMP + (6R)-5,10-methylene-5,6,7,8-tetrahydrofolate = 7,8-dihydrofolate + dTMP. The protein operates within pyrimidine metabolism; dTTP biosynthesis. The protein is Thymidylate synthase of Equus caballus (Horse).